A 193-amino-acid chain; its full sequence is MSQTDIHVANAASMSQDDARYLISLIRTVPDFPREGILFRDFMPVFADSRGLRILLDALIAALPVHTDEFDAVAGLEARGFLFGPALAAQLGKGFIAIRKAGKLPPPVHACSYALEYGKATLEIEDTSVRNNERILIVDDLIATGGSAAAAKDLIESAGGKVAGYEFVMELEGLDGRTALGDYPYGSLLKMPA.

This sequence belongs to the purine/pyrimidine phosphoribosyltransferase family. As to quaternary structure, homodimer.

It is found in the cytoplasm. It carries out the reaction AMP + diphosphate = 5-phospho-alpha-D-ribose 1-diphosphate + adenine. Its pathway is purine metabolism; AMP biosynthesis via salvage pathway; AMP from adenine: step 1/1. In terms of biological role, catalyzes a salvage reaction resulting in the formation of AMP, that is energically less costly than de novo synthesis. The sequence is that of Adenine phosphoribosyltransferase from Bifidobacterium animalis subsp. lactis (strain AD011).